The sequence spans 484 residues: Arginine ADP-riboxanase OspC2 (484 aa).

Residues histidine 143, glutamine 144, serine 145, leucine 149, isoleucine 162, asparagine 172, phenylalanine 188, histidine 206, phenylalanine 211, aspartate 231, and glutamate 326 each coordinate NAD(+). Glutamate 326 is an active-site residue. 2 ANK repeats span residues 414–444 and 451–480; these read LYDVEYLLSEDSANYKVLEYFISNGLVDVNK and SGDTMLDNAMKSKDSKTIDFLLKNGAVSGK.

Belongs to the OspC family.

It localises to the secreted. It carries out the reaction L-arginyl-[protein] + NAD(+) = ADP-riboxanated L-argininyl-[protein] + nicotinamide + NH4(+) + H(+). ADP-riboxanase effector that mediates arginine ADP-riboxanation of host caspases. ADP-riboxanation of host apoptotic caspases (CASP3 and CASP9) prevents their activation, thereby inhibiting host cell extrinsic and intrinsic apoptosis. Does not catalyze ADP-riboxanation of host CASP4/CASP11 or CASP8. In contrast to Ospc1 and OspC3, not able to inactivate host calmodulin. The protein is Arginine ADP-riboxanase OspC2 of Shigella flexneri.